The following is a 508-amino-acid chain: Photosystem II CP47 reaction center protein (508 aa).

6 helical membrane-spanning segments follow: residues Ser21 to Ser36, Ile101 to Trp115, Gly140 to Phe156, Ile203 to Ser218, Val237 to Val252, and Ser457 to Arg472.

Belongs to the PsbB/PsbC family. PsbB subfamily. PSII is composed of 1 copy each of membrane proteins PsbA, PsbB, PsbC, PsbD, PsbE, PsbF, PsbH, PsbI, PsbJ, PsbK, PsbL, PsbM, PsbT, PsbX, PsbY, PsbZ, Psb30/Ycf12, at least 3 peripheral proteins of the oxygen-evolving complex and a large number of cofactors. It forms dimeric complexes. Requires Binds multiple chlorophylls. PSII binds additional chlorophylls, carotenoids and specific lipids. as cofactor.

It is found in the plastid. It localises to the chloroplast thylakoid membrane. Functionally, one of the components of the core complex of photosystem II (PSII). It binds chlorophyll and helps catalyze the primary light-induced photochemical processes of PSII. PSII is a light-driven water:plastoquinone oxidoreductase, using light energy to abstract electrons from H(2)O, generating O(2) and a proton gradient subsequently used for ATP formation. The protein is Photosystem II CP47 reaction center protein of Fagopyrum esculentum subsp. ancestrale (Wild buckwheat).